Consider the following 559-residue polypeptide: Glutamine--tRNA ligase (559 aa).

Residues 44 to 54 (PEPNGYLHIGH) carry the 'HIGH' region motif. ATP is bound by residues 45–47 (EPN) and 51–57 (HIGHAKS). 2 residues coordinate L-glutamine: D77 and Y222. ATP-binding positions include T241 and 272-273 (RL). The 'KMSKS' region motif lies at 279–283 (LTSKR).

This sequence belongs to the class-I aminoacyl-tRNA synthetase family. As to quaternary structure, monomer.

The protein resides in the cytoplasm. The catalysed reaction is tRNA(Gln) + L-glutamine + ATP = L-glutaminyl-tRNA(Gln) + AMP + diphosphate. In Actinobacillus succinogenes (strain ATCC 55618 / DSM 22257 / CCUG 43843 / 130Z), this protein is Glutamine--tRNA ligase.